Here is a 79-residue protein sequence, read N- to C-terminus: Acyl carrier protein (79 aa).

Positions 4 to 79 (AEIKDKVYDI…QAIDYIVNKK (76 aa)) constitute a Carrier domain. An O-(pantetheine 4'-phosphoryl)serine modification is found at Ser39.

The protein belongs to the acyl carrier protein (ACP) family. 4'-phosphopantetheine is transferred from CoA to a specific serine of apo-ACP by AcpS. This modification is essential for activity because fatty acids are bound in thioester linkage to the sulfhydryl of the prosthetic group.

It localises to the cytoplasm. The protein operates within lipid metabolism; fatty acid biosynthesis. In terms of biological role, carrier of the growing fatty acid chain in fatty acid biosynthesis. This chain is Acyl carrier protein, found in Chlorobaculum parvum (strain DSM 263 / NCIMB 8327) (Chlorobium vibrioforme subsp. thiosulfatophilum).